Here is a 447-residue protein sequence, read N- to C-terminus: N-succinylarginine dihydrolase (447 aa).

Substrate is bound by residues 19-28 (AGLSFGNEAS), asparagine 110, and 137-138 (HR). Glutamate 174 is a catalytic residue. Arginine 214 lines the substrate pocket. Histidine 250 is an active-site residue. Aspartate 252 and asparagine 365 together coordinate substrate. Cysteine 371 (nucleophile) is an active-site residue.

This sequence belongs to the succinylarginine dihydrolase family. In terms of assembly, homodimer.

It carries out the reaction N(2)-succinyl-L-arginine + 2 H2O + 2 H(+) = N(2)-succinyl-L-ornithine + 2 NH4(+) + CO2. The protein operates within amino-acid degradation; L-arginine degradation via AST pathway; L-glutamate and succinate from L-arginine: step 2/5. Functionally, catalyzes the hydrolysis of N(2)-succinylarginine into N(2)-succinylornithine, ammonia and CO(2). In Acinetobacter baumannii (strain ATCC 17978 / DSM 105126 / CIP 53.77 / LMG 1025 / NCDC KC755 / 5377), this protein is N-succinylarginine dihydrolase.